Consider the following 518-residue polypeptide: NADH-quinone oxidoreductase subunit N (518 aa).

14 helical membrane passes run 18 to 38, 45 to 65, 82 to 102, 113 to 133, 136 to 156, 171 to 191, 220 to 240, 254 to 274, 295 to 315, 328 to 348, 355 to 375, 399 to 419, 439 to 459, and 486 to 506; these read FRPE…DLVF, VALL…LLAI, AFAI…VIIA, IGQF…MASA, LLMV…LAGF, VIYG…LYGL, VALV…VAAV, PTPF…ALAI, LAGI…MTLG, LLAY…SAVS, VMIY…VVIL, AVAF…AGFV, WYAW…YYYV, and VMLG…TPMV.

It belongs to the complex I subunit 2 family. In terms of assembly, NDH-1 is composed of 14 different subunits. Subunits NuoA, H, J, K, L, M, N constitute the membrane sector of the complex.

The protein resides in the cell inner membrane. The catalysed reaction is a quinone + NADH + 5 H(+)(in) = a quinol + NAD(+) + 4 H(+)(out). In terms of biological role, NDH-1 shuttles electrons from NADH, via FMN and iron-sulfur (Fe-S) centers, to quinones in the respiratory chain. The immediate electron acceptor for the enzyme in this species is believed to be ubiquinone. Couples the redox reaction to proton translocation (for every two electrons transferred, four hydrogen ions are translocated across the cytoplasmic membrane), and thus conserves the redox energy in a proton gradient. This Anaeromyxobacter sp. (strain Fw109-5) protein is NADH-quinone oxidoreductase subunit N.